We begin with the raw amino-acid sequence, 405 residues long: MLPLLLCIVPYCWSSRLDPRASSFDYNGEKVRGVNLGGWLVLEPWITPSIFDAAGAEAVDEWSLTKILGKEEAEARLSAHWKSFVSAGDFQRMADAGLNHVRIPIGYWALGPLEGDPYVDGQLEYLDKAVEWAGAAGLKVLIDLHGAPGSQNGFDNSGRRGAIQWQQGDTVEQTLDAFDLLAERYLGSDTVAAIEAINEPNIPGGVDQGKLQEYYGSVYGIVNKYNAGTSVVYGDGFLPVESWNGFKTEGSKVVMDTHHYHMFDNGLIAMDIDSHIDAVCQFAHQHLEASDKPVIVGEWTGAVTDCAKYLNGKGNGARYDGSYAADKAIGDCSSLATGFVSKLSDEERSDMRRFIEAQLDAFELKSGWVFWTWKTEGAPGWDMSDLLEAGVFPTSPDDREFPKQC.

Residues 1–14 form the signal peptide; sequence MLPLLLCIVPYCWS. Glu199 acts as the Proton donor in catalysis. Cystine bridges form between Cys280/Cys405 and Cys306/Cys332. Residue Glu298 is the Nucleophile of the active site.

It belongs to the glycosyl hydrolase 5 (cellulase A) family. Monomer. Mn(2+) is required as a cofactor.

The protein resides in the secreted. It carries out the reaction Successive hydrolysis of beta-D-glucose units from the non-reducing ends of (1-&gt;3)-beta-D-glucans, releasing alpha-glucose.. Its function is as follows. Beta-glucanases participate in the metabolism of beta-glucan, the main structural component of the cell wall. It could also function biosynthetically as a transglycosylase. This Aspergillus oryzae (strain ATCC 42149 / RIB 40) (Yellow koji mold) protein is Glucan 1,3-beta-glucosidase A (exgA).